The primary structure comprises 108 residues: MSGSAKYSDWSQVMTLIANAAEQGNHQPLLTMLMTPDEREALVARVNIFHELLQGELSQRQISQLLGVGVATITRGSNELKSHTDEEKVWLMDLLEKSTKSELDVEKE.

The DNA-binding element occupies 59–82 (QRQISQLLGVGVATITRGSNELKS).

This sequence belongs to the TrpR family. In terms of assembly, homodimer.

Its subcellular location is the cytoplasm. Functionally, this protein is an aporepressor. When complexed with L-tryptophan it binds the operator region of the trp operon and prevents the initiation of transcription. The chain is Trp operon repressor homolog from Aliivibrio fischeri (strain ATCC 700601 / ES114) (Vibrio fischeri).